The primary structure comprises 590 residues: Protein NRT1/ PTR FAMILY 6.4 (590 aa).

Residues 1-24 form a disordered region; it reads MVHVSSSHGAKDGSEEAYDYRGNP. The next 12 membrane-spanning stretches (helical) occupy residues 48 to 68, 73 to 93, 104 to 124, 147 to 167, 197 to 217, 222 to 242, 332 to 352, 371 to 391, 419 to 439, 453 to 473, 492 to 512, and 533 to 553; these read ICVM…LHIS, ATIV…GGFL, VAIS…ATTI, GHQL…GGGI, FYFS…YVQD, GWGY…LLCG, VKLV…WTIY, GSFT…ILLF, IGVG…IENA, AFWL…AYVG, GLFL…VSLV, and FYWL…VFAM.

The protein belongs to the major facilitator superfamily. Proton-dependent oligopeptide transporter (POT/PTR) (TC 2.A.17) family. As to expression, expressed in leaves, flowers and siliques. Detected in leaves.

The protein resides in the membrane. Its function is as follows. Low-affinity nitrate transporter. In Arabidopsis thaliana (Mouse-ear cress), this protein is Protein NRT1/ PTR FAMILY 6.4 (NPF6.4).